The chain runs to 236 residues: 2,3,4,5-tetrahydropyridine-2,6-dicarboxylate N-acetyltransferase (236 aa).

This sequence belongs to the transferase hexapeptide repeat family. DapH subfamily.

The catalysed reaction is (S)-2,3,4,5-tetrahydrodipicolinate + acetyl-CoA + H2O = L-2-acetamido-6-oxoheptanedioate + CoA. Its pathway is amino-acid biosynthesis; L-lysine biosynthesis via DAP pathway; LL-2,6-diaminopimelate from (S)-tetrahydrodipicolinate (acetylase route): step 1/3. Catalyzes the transfer of an acetyl group from acetyl-CoA to tetrahydrodipicolinate. In Lactobacillus acidophilus (strain ATCC 700396 / NCK56 / N2 / NCFM), this protein is 2,3,4,5-tetrahydropyridine-2,6-dicarboxylate N-acetyltransferase.